The primary structure comprises 669 residues: DNA mismatch repair protein MutL (669 aa).

The segment covering 356 to 371 has biased composition (basic and acidic residues); that stretch reads FEQRQNTENKQEKTFS. The interval 356–379 is disordered; sequence FEQRQNTENKQEKTFSSEESNSKP.

This sequence belongs to the DNA mismatch repair MutL/HexB family.

This protein is involved in the repair of mismatches in DNA. It is required for dam-dependent methyl-directed DNA mismatch repair. May act as a 'molecular matchmaker', a protein that promotes the formation of a stable complex between two or more DNA-binding proteins in an ATP-dependent manner without itself being part of a final effector complex. The polypeptide is DNA mismatch repair protein MutL (Staphylococcus aureus (strain MRSA252)).